Reading from the N-terminus, the 150-residue chain is Deoxyuridine 5'-triphosphate nucleotidohydrolase (150 aa).

Residues 70 to 72, Asn-82, 86 to 88, and Met-96 contribute to the substrate site; these read RSG and LID.

Belongs to the dUTPase family. Mg(2+) is required as a cofactor.

It carries out the reaction dUTP + H2O = dUMP + diphosphate + H(+). Its pathway is pyrimidine metabolism; dUMP biosynthesis; dUMP from dCTP (dUTP route): step 2/2. In terms of biological role, this enzyme is involved in nucleotide metabolism: it produces dUMP, the immediate precursor of thymidine nucleotides and it decreases the intracellular concentration of dUTP so that uracil cannot be incorporated into DNA. This is Deoxyuridine 5'-triphosphate nucleotidohydrolase from Baumannia cicadellinicola subsp. Homalodisca coagulata.